Consider the following 325-residue polypeptide: MFNRIVALTQKVLDGGQINQIEALELAQAEGADILILAAMAAKIREKYVGDKVELCSIISVKTGHCPEDCAFCAQSVHHHTEITPTEMLEEEKILAKAKAMEAAGAHRFDLVTAGLGMTEEDEDFKKILAIYKRLRQEVKLELCACLGTLTEKAAMQLREVGVTRYNHNLETARSFFSNIVTTHTYDERIETIKNVKKAGMEVCCGGIIGMGETMEQRIEFAFTLKELDVDAIPINVLNPIKGTKLENRPLLSPLEVIKTFAIFRFILPDKNIRYAGGREVNLRDMQALGLMAGLNGMLIGHYLTTKGREVETDLQMIRDLGLKI.

Positions 49–279 constitute a Radical SAM core domain; sequence VGDKVELCSI…DKNIRYAGGR (231 aa). The [4Fe-4S] cluster site is built by cysteine 66, cysteine 70, and cysteine 73. The [2Fe-2S] cluster site is built by cysteine 144, cysteine 204, and arginine 274.

Belongs to the radical SAM superfamily. Biotin synthase family. Homodimer. [4Fe-4S] cluster is required as a cofactor. [2Fe-2S] cluster serves as cofactor.

The catalysed reaction is (4R,5S)-dethiobiotin + (sulfur carrier)-SH + 2 reduced [2Fe-2S]-[ferredoxin] + 2 S-adenosyl-L-methionine = (sulfur carrier)-H + biotin + 2 5'-deoxyadenosine + 2 L-methionine + 2 oxidized [2Fe-2S]-[ferredoxin]. Its pathway is cofactor biosynthesis; biotin biosynthesis; biotin from 7,8-diaminononanoate: step 2/2. Functionally, catalyzes the conversion of dethiobiotin (DTB) to biotin by the insertion of a sulfur atom into dethiobiotin via a radical-based mechanism. The polypeptide is Biotin synthase (Carboxydothermus hydrogenoformans (strain ATCC BAA-161 / DSM 6008 / Z-2901)).